We begin with the raw amino-acid sequence, 378 residues long: Erythronate-4-phosphate dehydrogenase (378 aa).

Ser-45 and Thr-66 together coordinate substrate. NAD(+) contacts are provided by Asp-146 and Thr-175. The active site involves Arg-208. Residue Asp-232 coordinates NAD(+). Residue Glu-237 is part of the active site. The active-site Proton donor is the His-254. Gly-257 serves as a coordination point for NAD(+). Tyr-258 contributes to the substrate binding site.

Belongs to the D-isomer specific 2-hydroxyacid dehydrogenase family. PdxB subfamily. In terms of assembly, homodimer.

The protein resides in the cytoplasm. The catalysed reaction is 4-phospho-D-erythronate + NAD(+) = (R)-3-hydroxy-2-oxo-4-phosphooxybutanoate + NADH + H(+). Its pathway is cofactor biosynthesis; pyridoxine 5'-phosphate biosynthesis; pyridoxine 5'-phosphate from D-erythrose 4-phosphate: step 2/5. Its function is as follows. Catalyzes the oxidation of erythronate-4-phosphate to 3-hydroxy-2-oxo-4-phosphonooxybutanoate. This is Erythronate-4-phosphate dehydrogenase from Escherichia coli O139:H28 (strain E24377A / ETEC).